The chain runs to 254 residues: Imidazole glycerol phosphate synthase subunit HisF (254 aa).

Active-site residues include Asp12 and Asp131.

This sequence belongs to the HisA/HisF family. Heterodimer of HisH and HisF.

It is found in the cytoplasm. It carries out the reaction 5-[(5-phospho-1-deoxy-D-ribulos-1-ylimino)methylamino]-1-(5-phospho-beta-D-ribosyl)imidazole-4-carboxamide + L-glutamine = D-erythro-1-(imidazol-4-yl)glycerol 3-phosphate + 5-amino-1-(5-phospho-beta-D-ribosyl)imidazole-4-carboxamide + L-glutamate + H(+). Its pathway is amino-acid biosynthesis; L-histidine biosynthesis; L-histidine from 5-phospho-alpha-D-ribose 1-diphosphate: step 5/9. Its function is as follows. IGPS catalyzes the conversion of PRFAR and glutamine to IGP, AICAR and glutamate. The HisF subunit catalyzes the cyclization activity that produces IGP and AICAR from PRFAR using the ammonia provided by the HisH subunit. The polypeptide is Imidazole glycerol phosphate synthase subunit HisF (Leifsonia xyli subsp. xyli (strain CTCB07)).